Reading from the N-terminus, the 380-residue chain is Cytochrome b (380 aa).

Transmembrane regions (helical) follow at residues 34–54, 78–99, 114–134, and 179–199; these read FGSL…LLAM, WLIR…YLHI, WNTG…GYVL, and FFAL…IHLT. Residues His84 and His98 each coordinate heme b. Residues His183 and His197 each coordinate heme b. Residue His202 participates in a ubiquinone binding. The next 4 helical transmembrane spans lie at 227–247, 289–309, 321–341, and 348–368; these read LKDI…ALFS, LGGV…PFLH, LSQL…WVGS, and FIII…ILFP.

Belongs to the cytochrome b family. As to quaternary structure, the cytochrome bc1 complex contains 11 subunits: 3 respiratory subunits (MT-CYB, CYC1 and UQCRFS1), 2 core proteins (UQCRC1 and UQCRC2) and 6 low-molecular weight proteins (UQCRH/QCR6, UQCRB/QCR7, UQCRQ/QCR8, UQCR10/QCR9, UQCR11/QCR10 and a cleavage product of UQCRFS1). This cytochrome bc1 complex then forms a dimer. Heme b serves as cofactor.

The protein localises to the mitochondrion inner membrane. Its function is as follows. Component of the ubiquinol-cytochrome c reductase complex (complex III or cytochrome b-c1 complex) that is part of the mitochondrial respiratory chain. The b-c1 complex mediates electron transfer from ubiquinol to cytochrome c. Contributes to the generation of a proton gradient across the mitochondrial membrane that is then used for ATP synthesis. The chain is Cytochrome b (MT-CYB) from Calonectris leucomelas (Streaked shearwater).